A 152-amino-acid polypeptide reads, in one-letter code: Ribosome maturation factor RimP (152 aa).

The protein belongs to the RimP family.

Its subcellular location is the cytoplasm. In terms of biological role, required for maturation of 30S ribosomal subunits. This is Ribosome maturation factor RimP from Erwinia tasmaniensis (strain DSM 17950 / CFBP 7177 / CIP 109463 / NCPPB 4357 / Et1/99).